Consider the following 496-residue polypeptide: Apulose kinase (496 aa).

ATP-binding positions include 13-15 (TTN), T267, G308, and 408-412 (GATQN).

Belongs to the FGGY kinase family.

The enzyme catalyses apulose + ATP = apulose 4-phosphate + ADP + H(+). Its pathway is carbohydrate metabolism. In terms of biological role, involved in catabolism of D-apiose. Catalyzes phosphorylation of apulose to form apulose 4-phosphate. The polypeptide is Apulose kinase (Pectobacterium atrosepticum (strain SCRI 1043 / ATCC BAA-672) (Erwinia carotovora subsp. atroseptica)).